The following is a 91-amino-acid chain: Potassium channel toxin AaTXK-beta (91 aa).

An N-terminal signal peptide occupies residues 1–19 (MQRNLVVLLFLGMVALSSC). A propeptide spanning residues 20 to 27 (GLREKHVQ) is cleaved from the precursor. A BetaSPN-type CS-alpha/beta domain is found at 54–91 (QFGCPAYQGYCDDHCQDIKKEEGFCHGFKCKCGIPMGF). Cystine bridges form between cysteine 57–cysteine 78, cysteine 64–cysteine 83, and cysteine 68–cysteine 85.

This sequence belongs to the long chain scorpion toxin family. Class 1 subfamily. In terms of assembly, monomer (both chains). In terms of tissue distribution, expressed by the venom gland.

The protein localises to the secreted. In terms of biological role, inhibits voltage-gated potassium channels (Kv). Does not activate Kv7 channels. Its function is as follows. Peptide activator of Kv7.4/KCNQ4 channels. Also acts as a subtype-selective activator of channels formed by Kv7.3/KCNQ3, Kv7.2/Kv7.3 (KCNQ2/KCNQ3), Kv7.5/Kv7.3 (KCNQ3/KCNQ5) subunits. The protein is Potassium channel toxin AaTXK-beta of Androctonus australis (Sahara scorpion).